A 261-amino-acid polypeptide reads, in one-letter code: Proliferating cell nuclear antigen (261 aa).

The DNA-binding element occupies 61–80 (RCDRNQSIGVKMSSMSKILK). A Glycyl lysine isopeptide (Lys-Gly) (interchain with G-Cter in ubiquitin) cross-link involves residue lysine 164.

It belongs to the PCNA family. As to quaternary structure, homotrimer. Forms a complex with activator 1 heteropentamer in the presence of ATP. Component of the replisome complex. Interacts with apex2.L (via PIP box and GRF-type Zinc finger domain); the interaction is required for 3'-5' single-strand break (SSB) end resection, assembly of a checkpoint protein complex to SSB sites, and SSB signaling. In terms of processing, monoubiquitinated by the ube2b-rad18 complex on Lys-164. Monoubiquitination at Lys-164 also takes place in undamaged proliferating cells, and is mediated by the dcx(dtl) complex, leading to enhance PCNA-dependent translesion DNA synthesis.

The protein resides in the nucleus. Functionally, this protein is an auxiliary protein of DNA polymerase delta and is involved in the control of eukaryotic DNA replication by increasing the polymerase's processibility during elongation of the leading strand. Promotes 3'-5' nuclease activity of the DNA-endonuclease apex2.L in response to DNA damage. This Xenopus laevis (African clawed frog) protein is Proliferating cell nuclear antigen (pcna).